The following is a 118-amino-acid chain: Small ribosomal subunit protein uS13 (118 aa).

The disordered stretch occupies residues Ser-94 to Lys-118.

It belongs to the universal ribosomal protein uS13 family. As to quaternary structure, part of the 30S ribosomal subunit. Forms a loose heterodimer with protein S19. Forms two bridges to the 50S subunit in the 70S ribosome.

In terms of biological role, located at the top of the head of the 30S subunit, it contacts several helices of the 16S rRNA. In the 70S ribosome it contacts the 23S rRNA (bridge B1a) and protein L5 of the 50S subunit (bridge B1b), connecting the 2 subunits; these bridges are implicated in subunit movement. Contacts the tRNAs in the A and P-sites. This chain is Small ribosomal subunit protein uS13, found in Colwellia psychrerythraea (strain 34H / ATCC BAA-681) (Vibrio psychroerythus).